A 375-amino-acid polypeptide reads, in one-letter code: Stimulator of interferon genes protein 2 (375 aa).

4 helical membrane passes run 30–50 (TATV…LLAV), 60–80 (IHFL…GELV), 114–134 (AGSI…VLYE), and 144–164 (YPIL…LVGL). Y195, R256, and R262 together coordinate 2',3'-cGAMP.

This sequence belongs to the STING family.

It is found in the membrane. Functionally, facilitator of innate immune signaling that acts as a sensor of second messenger signals produced by cyclic GMP-AMP synthase-like receptors (cGLRs) and promotes the production of type I interferon. Innate immune response is triggered in response to nucleotides from viruses and bacteria delivered to the cytoplasm. Acts by binding cyclic dinucleotides: recognizes and binds 2'-3' linked cGAMP (2'-3'-cGAMP), a second messengers produced by cGLRs in response to nucleotides in the cytosol, such as double-stranded RNA (dsRNA). Upon binding to 2'-3'-cGAMP, oligomerizes and promotes the recruitment and subsequent activation of the transcription factor IRF3 to induce expression of type I interferon. The sequence is that of Stimulator of interferon genes protein 2 from Stylophora pistillata (Smooth cauliflower coral).